The sequence spans 186 residues: Zein-alpha PZ19.1 (186 aa).

An N-terminal signal peptide occupies residues 1-21 (MAAKIFCLIMLLGLSASAATA).

It belongs to the zein family.

Functionally, zeins are major seed storage proteins. The sequence is that of Zein-alpha PZ19.1 from Zea mays (Maize).